The primary structure comprises 125 residues: Large ribosomal subunit protein bL20 (125 aa).

It belongs to the bacterial ribosomal protein bL20 family.

In terms of biological role, binds directly to 23S ribosomal RNA and is necessary for the in vitro assembly process of the 50S ribosomal subunit. It is not involved in the protein synthesizing functions of that subunit. This chain is Large ribosomal subunit protein bL20, found in Methylobacterium sp. (strain 4-46).